We begin with the raw amino-acid sequence, 231 residues long: MTVLTDKIAVVTGAGSGIGEAIATLLHEEGAKVVLAGRNKEKLQNVANQLSQDSVKVVPTDVTNKEEVDELIKIAQQTFGGLDIVINSAGQMLSSKITDYQVDEWDSMIDVNIKGTLYTVQAALPTMLEQSSGHLINIASISGFEVTKSSTIYSATKAAVHTITQGLEKELAKTGVKVTSISPGMVDTAITAAYNPSDRKKLDPQDIAEAVLYALTQPSHVNVNEITVRPV.

10-34 (VVTGAGSGIGEAIATLLHEEGAKVV) is an NADP(+) binding site. Residue Ser-140 coordinates substrate. Tyr-153 acts as the Proton acceptor in catalysis.

This sequence belongs to the short-chain dehydrogenases/reductases (SDR) family.

This is an uncharacterized protein from Staphylococcus aureus (strain MW2).